A 306-amino-acid chain; its full sequence is UDP-N-acetylenolpyruvoylglucosamine reductase (306 aa).

Residues 34–199 enclose the FAD-binding PCMH-type domain; the sequence is RVGGPAQLLF…TSVRLRGAIA (166 aa). Residue arginine 179 is part of the active site. Serine 228 (proton donor) is an active-site residue. Glutamate 298 is a catalytic residue.

Belongs to the MurB family. Requires FAD as cofactor.

It is found in the cytoplasm. It catalyses the reaction UDP-N-acetyl-alpha-D-muramate + NADP(+) = UDP-N-acetyl-3-O-(1-carboxyvinyl)-alpha-D-glucosamine + NADPH + H(+). Its pathway is cell wall biogenesis; peptidoglycan biosynthesis. Its function is as follows. Cell wall formation. This Rhodopseudomonas palustris (strain BisA53) protein is UDP-N-acetylenolpyruvoylglucosamine reductase.